The chain runs to 412 residues: Multidrug resistance protein MdtG (412 aa).

Transmembrane regions (helical) follow at residues 19–39 (LGCF…PLYV), 56–76 (LVFS…GGLA), 90–110 (LGMS…QFLL), 113–133 (ALLG…ATQI), 144–164 (TLST…GFLA), 171–191 (TVFF…LFLI), 222–242 (LFVT…ILTL), 254–274 (IAFI…MSAP), 288–308 (ILIV…FVQT), 317–337 (FLLG…LVYN), and 376–396 (AVFL…TLSL).

The protein belongs to the major facilitator superfamily. DHA1 family. MdtG (TC 2.A.1.2.20) subfamily.

It is found in the cell inner membrane. The protein is Multidrug resistance protein MdtG of Klebsiella pneumoniae (strain 342).